Consider the following 119-residue polypeptide: MIQKNTLLEVADNSGARAVLCIGLLGGRKSASVGDTIIISTKSINPKGKVEKGKVYKAVVVRVKNSVKKSDGSVIRFSSNAVVLINDQGEPLGTRVFGPVKKLLSGSFMKIMSLADEVL.

This sequence belongs to the universal ribosomal protein uL14 family. In terms of assembly, part of the 50S ribosomal subunit. Forms a cluster with proteins L3 and L19. In the 70S ribosome, L14 and L19 interact and together make contacts with the 16S rRNA in bridges B5 and B8.

Binds to 23S rRNA. Forms part of two intersubunit bridges in the 70S ribosome. This chain is Large ribosomal subunit protein uL14, found in Wolbachia pipientis subsp. Culex pipiens (strain wPip).